The following is a 256-amino-acid chain: MTNMAAKNQFKGSSFTLAQLIEEVGRNGGKKPVFQYKVPRSIRWASTALAVVFLTYGAAYTDMSWRTAREVYGNATEEEKHSPWFKCKTFGPVALGVLPVILAAATKHVTSRLVTEMKYLPPLKNSTVPRCQLTRRTYLLGRPVSITREINELSKNKATKIFTGVGSQGMEDKATFVFFTVDEKAPSFFNKFYIFSRSGSVVKNDARILDCFFNSVAENKLLNRSILTQILSHTSAKTLFHSGNSRSSIKNIVKPK.

This is an uncharacterized protein from Saccharomyces cerevisiae (strain ATCC 204508 / S288c) (Baker's yeast).